A 156-amino-acid chain; its full sequence is uncharacterized protein (156 aa).

Histidine 55 is an active-site residue.

The protein belongs to the thioester dehydratase family. FabZ subfamily.

This is an uncharacterized protein from Halalkalibacterium halodurans (strain ATCC BAA-125 / DSM 18197 / FERM 7344 / JCM 9153 / C-125) (Bacillus halodurans).